Consider the following 553-residue polypeptide: Arginine--tRNA ligase (553 aa).

The 'HIGH' region motif lies at 130 to 140; it reads ANPTGDLHIGH.

It belongs to the class-I aminoacyl-tRNA synthetase family. In terms of assembly, monomer.

The protein resides in the cytoplasm. The enzyme catalyses tRNA(Arg) + L-arginine + ATP = L-arginyl-tRNA(Arg) + AMP + diphosphate. This chain is Arginine--tRNA ligase, found in Staphylococcus epidermidis (strain ATCC 12228 / FDA PCI 1200).